A 291-amino-acid polypeptide reads, in one-letter code: F-box/kelch-repeat protein At5g38670 (291 aa).

The region spanning Thr5–Arg51 is the F-box domain. Kelch repeat units follow at residues Glu46 to Glu91, Lys92 to Gly140, Leu142 to Ile187, and Lys189 to Lys232.

The chain is F-box/kelch-repeat protein At5g38670 from Arabidopsis thaliana (Mouse-ear cress).